Consider the following 374-residue polypeptide: Methylthioribose-1-phosphate isomerase (374 aa).

Residue Asp-256 is the Proton donor of the active site.

This sequence belongs to the eIF-2B alpha/beta/delta subunits family. MtnA subfamily.

The protein localises to the cytoplasm. It is found in the nucleus. It catalyses the reaction 5-(methylsulfanyl)-alpha-D-ribose 1-phosphate = 5-(methylsulfanyl)-D-ribulose 1-phosphate. The protein operates within amino-acid biosynthesis; L-methionine biosynthesis via salvage pathway; L-methionine from S-methyl-5-thio-alpha-D-ribose 1-phosphate: step 1/6. Functionally, catalyzes the interconversion of methylthioribose-1-phosphate (MTR-1-P) into methylthioribulose-1-phosphate (MTRu-1-P). The polypeptide is Methylthioribose-1-phosphate isomerase (Leishmania braziliensis).